We begin with the raw amino-acid sequence, 638 residues long: Keratin, type II cytoskeletal 2 oral (638 aa).

The tract at residues 1–182 (MNRQVCKKSF…DPQIGQVKAQ (182 aa)) is head. An omega-N-methylarginine mark is found at R85 and R110. The interval 183–218 (EREQIKTLNNKFASFIDKVRFLEQQNKVLETKWELL) is coil 1A. The IF rod domain occupies 183–496 (EREQIKTLNN…KLLEGEECRM (314 aa)). The linker 1 stretch occupies residues 219 to 237 (QQQTTGSGPSSLEPCFESY). The interval 238-329 (ISFLCKQLDS…TLYEMELSQM (92 aa)) is coil 1B. The linker 12 stretch occupies residues 330–353 (QSHASDTSVVLSMDNNRCLDLGSI). The tract at residues 354–492 (IAEVRAQYEE…ATYRKLLEGE (139 aa)) is coil 2. The segment at 493 to 638 (ECRMSGECQS…TSSSQHSSTK (146 aa)) is tail. Residues 532-638 (SGSGGYKGGS…TSSSQHSSTK (107 aa)) are disordered. The segment covering 540 to 549 (GSSSSSSSGY) has biased composition (low complexity). Residues 550-572 (GVSGGSGSGYGGVSSGSTGGRGS) show a composition bias toward gly residues. The span at 573 to 583 (SGSYQSSSSGS) shows a compositional bias: low complexity. An Omega-N-methylarginine modification is found at R584. Residues 590-608 (SISVSHSGMGSSSGSIQTS) show a composition bias toward low complexity. Over residues 609–620 (GGSGYKSGGGGS) the composition is skewed to gly residues. A compositionally biased stretch (low complexity) spans 626–638 (SQTTSSSQHSSTK).

It belongs to the intermediate filament family. As to quaternary structure, heterotetramer of two type I and two type II keratins.

Functionally, probably contributes to terminal cornification. This Homo sapiens (Human) protein is Keratin, type II cytoskeletal 2 oral (KRT76).